Consider the following 61-residue polypeptide: Large ribosomal subunit protein bL32 (61 aa).

Basic residues predominate over residues 1–16; sequence MAVPKRKTSPSKRGMR. The interval 1–61 is disordered; the sequence is MAVPKRKTSP…RSVLTPKNSG (61 aa). The segment covering 28 to 44 has biased composition (basic and acidic residues); sequence VEDKDSGELRRPHHIDL.

Belongs to the bacterial ribosomal protein bL32 family.

The polypeptide is Large ribosomal subunit protein bL32 (Bartonella bacilliformis (strain ATCC 35685 / KC583 / Herrer 020/F12,63)).